Consider the following 486-residue polypeptide: UDP-N-acetylmuramate--L-alanine ligase (486 aa).

129–135 (GTHGKTT) serves as a coordination point for ATP.

The protein belongs to the MurCDEF family.

The protein resides in the cytoplasm. It catalyses the reaction UDP-N-acetyl-alpha-D-muramate + L-alanine + ATP = UDP-N-acetyl-alpha-D-muramoyl-L-alanine + ADP + phosphate + H(+). It participates in cell wall biogenesis; peptidoglycan biosynthesis. Cell wall formation. The polypeptide is UDP-N-acetylmuramate--L-alanine ligase (Vibrio vulnificus (strain YJ016)).